A 1045-amino-acid chain; its full sequence is Elongation factor 3 (1045 aa).

ADP-binding residues include Ile42, His44, and Ser83. 7 HEAT repeats span residues 86 to 123, 125 to 162, 166 to 203, 171 to 209, 205 to 241, 242 to 279, and 285 to 323; these read PYVV…AVNP, AVKA…QAKS, LRMT…TVEN, LIPV…IERF, DIER…EVTP, ATLS…LVED, and PFLN…VGAV. Residues Thr392 and His396 each coordinate ADP. ABC transporter domains lie at 426–641 and 667–993; these read EEGE…YYEL and VKVS…KKED. 4 residues coordinate ADP: Asn703, Glu922, Asn925, and His951. Residues 975 to 1045 are disordered; the sequence is GHNWVSGQGS…AYVSDDDADF (71 aa). Basic residues predominate over residues 1020-1031; that stretch reads RKKKKERMKKKK.

The protein belongs to the ABC transporter superfamily. ABCF family. EF3 subfamily.

It localises to the cytoplasm. The protein localises to the cytosol. It catalyses the reaction ATP + H2O = ADP + phosphate + H(+). Its pathway is protein biosynthesis; polypeptide chain elongation. Functionally, ribosome-dependent ATPase that functions in cytoplasmic translation elongation. Required for the ATP-dependent release of deacylated tRNA from the ribosomal E-site during protein biosynthesis. Stimulates the eEF1A-dependent binding of aminoacyl-tRNA to the ribosomal A-site, which has reduced affinity for tRNA as long as the E-site is occupied. Assists translation termination by stimulating the release of nascent protein from the ribosome by release factors. This chain is Elongation factor 3, found in Zygosaccharomyces rouxii (strain ATCC 2623 / CBS 732 / NBRC 1130 / NCYC 568 / NRRL Y-229).